The sequence spans 437 residues: Tol-Pal system protein TolB (437 aa).

The N-terminal stretch at 1-30 (MLPTPSRSHKLSGYAAVLFFLWLVCSPAQA) is a signal peptide. Over residues 410-423 (SDGRTRQQLSTQTG) the composition is skewed to polar residues. A disordered region spans residues 410–437 (SDGRTRQQLSTQTGDIREPAWGPLRRLQ).

It belongs to the TolB family. The Tol-Pal system is composed of five core proteins: the inner membrane proteins TolA, TolQ and TolR, the periplasmic protein TolB and the outer membrane protein Pal. They form a network linking the inner and outer membranes and the peptidoglycan layer.

Its subcellular location is the periplasm. Functionally, part of the Tol-Pal system, which plays a role in outer membrane invagination during cell division and is important for maintaining outer membrane integrity. In Nitrosospira multiformis (strain ATCC 25196 / NCIMB 11849 / C 71), this protein is Tol-Pal system protein TolB.